The following is a 510-amino-acid chain: Bifunctional purine biosynthesis protein PurH (510 aa).

The MGS-like domain maps to 1-145; sequence MSKRALISVS…KNFEDVLVVT (145 aa).

Belongs to the PurH family.

It carries out the reaction (6R)-10-formyltetrahydrofolate + 5-amino-1-(5-phospho-beta-D-ribosyl)imidazole-4-carboxamide = 5-formamido-1-(5-phospho-D-ribosyl)imidazole-4-carboxamide + (6S)-5,6,7,8-tetrahydrofolate. The enzyme catalyses IMP + H2O = 5-formamido-1-(5-phospho-D-ribosyl)imidazole-4-carboxamide. Its pathway is purine metabolism; IMP biosynthesis via de novo pathway; 5-formamido-1-(5-phospho-D-ribosyl)imidazole-4-carboxamide from 5-amino-1-(5-phospho-D-ribosyl)imidazole-4-carboxamide (10-formyl THF route): step 1/1. It participates in purine metabolism; IMP biosynthesis via de novo pathway; IMP from 5-formamido-1-(5-phospho-D-ribosyl)imidazole-4-carboxamide: step 1/1. This chain is Bifunctional purine biosynthesis protein PurH, found in Oceanobacillus iheyensis (strain DSM 14371 / CIP 107618 / JCM 11309 / KCTC 3954 / HTE831).